The primary structure comprises 496 residues: Ganglioside-induced differentiation-associated protein 2 (496 aa).

Disordered stretches follow at residues 22 to 45 (VRDG…GLHS) and 252 to 271 (PERQ…DSEE). Positions 44–224 (HSPFPYRNDI…TYRRLLPLYF (181 aa)) constitute a Macro domain. Residues 254–264 (RQIRISEKPGG) show a composition bias toward basic and acidic residues. The region spanning 329–483 (DLSDIAALKA…FVLDYDAREN (155 aa)) is the CRAL-TRIO domain.

This sequence belongs to the GDAP2 family.

The sequence is that of Ganglioside-induced differentiation-associated protein 2 from Xenopus tropicalis (Western clawed frog).